The following is a 394-amino-acid chain: Elongation factor Tu 2 (394 aa).

The tr-type G domain occupies Lys10 to Glu204. The interval Gly19 to Thr26 is G1. Gly19–Thr26 lines the GTP pocket. Mg(2+) is bound at residue Thr26. Residues Gly60–Ser64 are G2. Residues Asp81 to Gly84 are G3. GTP is bound by residues Asp81–His85 and Asn136–Asp139. The tract at residues Asn136–Asp139 is G4. A G5 region spans residues Ser174–Leu176.

Belongs to the TRAFAC class translation factor GTPase superfamily. Classic translation factor GTPase family. EF-Tu/EF-1A subfamily. Monomer.

The protein resides in the cytoplasm. The catalysed reaction is GTP + H2O = GDP + phosphate + H(+). Its function is as follows. GTP hydrolase that promotes the GTP-dependent binding of aminoacyl-tRNA to the A-site of ribosomes during protein biosynthesis. The protein is Elongation factor Tu 2 of Pseudoalteromonas translucida (strain TAC 125).